Consider the following 833-residue polypeptide: Major vault protein (833 aa).

MVP repeat units follow at residues arginine 10–proline 52, arginine 54–glutamine 115, proline 119–tyrosine 170, proline 171–serine 223, glutamate 224–asparagine 278, lysine 280–glycine 328, lysine 329–aspartate 380, and arginine 381–threonine 433.

In terms of assembly, the vault ribonucleoprotein particle is a huge (400 A x 670 A) cage structure of 12.9 MDa. It consists of a dimer of half-vaults, with each half-vault comprising 39 identical major vault protein (MVP) chains, PARP4 and one or more vault RNAs (vRNAs).

The protein resides in the cytoplasm. It localises to the nucleus. Functionally, required for normal vault structure. Vaults are multi-subunit structures that may act as scaffolds for proteins involved in signal transduction. Vaults may also play a role in nucleo-cytoplasmic transport. The protein is Major vault protein of Leishmania braziliensis.